The following is a 97-amino-acid chain: MSLYDIIRKPIITEASMAAMDQKKYTFEVDSRAHKLLIKQAVEAVFDVKVASVNTISVKPKSKRVGKYTGTKSGYKKAIVTLTEDSKKIEIFGEDAE.

The protein belongs to the universal ribosomal protein uL23 family. In terms of assembly, part of the 50S ribosomal subunit. Contacts protein L29, and trigger factor when it is bound to the ribosome.

One of the early assembly proteins it binds 23S rRNA. One of the proteins that surrounds the polypeptide exit tunnel on the outside of the ribosome. Forms the main docking site for trigger factor binding to the ribosome. The protein is Large ribosomal subunit protein uL23 of Lactococcus lactis subsp. cremoris (strain SK11).